The chain runs to 549 residues: Glucose-6-phosphate isomerase (549 aa).

The active-site Proton donor is the Glu-355. Catalysis depends on residues His-386 and Lys-514.

This sequence belongs to the GPI family.

It localises to the cytoplasm. The enzyme catalyses alpha-D-glucose 6-phosphate = beta-D-fructose 6-phosphate. The protein operates within carbohydrate biosynthesis; gluconeogenesis. It participates in carbohydrate degradation; glycolysis; D-glyceraldehyde 3-phosphate and glycerone phosphate from D-glucose: step 2/4. Functionally, catalyzes the reversible isomerization of glucose-6-phosphate to fructose-6-phosphate. This is Glucose-6-phosphate isomerase from Klebsiella pneumoniae subsp. pneumoniae (strain ATCC 700721 / MGH 78578).